Reading from the N-terminus, the 335-residue chain is Heme A synthase (335 aa).

8 helical membrane-spanning segments follow: residues 9-29 (VAIW…IGGF), 90-110 (YVHR…FIYF), 120-140 (VVIR…TGWY), 156-176 (MLTL…YQFF), 197-217 (VGII…VAGL), 255-275 (VQFI…VLTI), 283-303 (VYVM…TLLL), and 309-329 (IAIS…CFLC). Position 259 (H259) interacts with heme. Residue H313 participates in heme binding.

This sequence belongs to the COX15/CtaA family. Type 2 subfamily. Interacts with CtaB. Heme b serves as cofactor.

The protein resides in the cell membrane. It carries out the reaction Fe(II)-heme o + 2 A + H2O = Fe(II)-heme a + 2 AH2. It participates in porphyrin-containing compound metabolism; heme A biosynthesis; heme A from heme O: step 1/1. Its function is as follows. Catalyzes the conversion of heme O to heme A by two successive hydroxylations of the methyl group at C8. The first hydroxylation forms heme I, the second hydroxylation results in an unstable dihydroxymethyl group, which spontaneously dehydrates, resulting in the formyl group of heme A. The chain is Heme A synthase from Wolbachia sp. subsp. Brugia malayi (strain TRS).